A 245-amino-acid polypeptide reads, in one-letter code: 1-(5-phosphoribosyl)-5-[(5-phosphoribosylamino)methylideneamino] imidazole-4-carboxamide isomerase (245 aa).

Asp11 (proton acceptor) is an active-site residue. Catalysis depends on Asp132, which acts as the Proton donor.

This sequence belongs to the HisA/HisF family.

The protein localises to the cytoplasm. It carries out the reaction 1-(5-phospho-beta-D-ribosyl)-5-[(5-phospho-beta-D-ribosylamino)methylideneamino]imidazole-4-carboxamide = 5-[(5-phospho-1-deoxy-D-ribulos-1-ylimino)methylamino]-1-(5-phospho-beta-D-ribosyl)imidazole-4-carboxamide. It functions in the pathway amino-acid biosynthesis; L-histidine biosynthesis; L-histidine from 5-phospho-alpha-D-ribose 1-diphosphate: step 4/9. This Bacillus pumilus (strain SAFR-032) protein is 1-(5-phosphoribosyl)-5-[(5-phosphoribosylamino)methylideneamino] imidazole-4-carboxamide isomerase.